The primary structure comprises 84 residues: Small ribosomal subunit protein eS27 (84 aa).

Over residues 1–16 (MPLAKDLLHPTPEEEK) the composition is skewed to basic and acidic residues. The interval 1–23 (MPLAKDLLHPTPEEEKRKHKKKR) is disordered. Residues 37–59 (CPGCYKITTVFSHAQTVVLCVGC) form a C4-type zinc finger.

Belongs to the eukaryotic ribosomal protein eS27 family. As to quaternary structure, component of the small ribosomal subunit. Part of the small subunit (SSU) processome, composed of more than 70 proteins and the RNA chaperone small nucleolar RNA (snoRNA) U3. It depends on Zn(2+) as a cofactor.

The protein resides in the cytoplasm. The protein localises to the nucleus. Its subcellular location is the nucleolus. Component of the small ribosomal subunit. The ribosome is a large ribonucleoprotein complex responsible for the synthesis of proteins in the cell. Required for proper rRNA processing and maturation of 18S rRNAs. Part of the small subunit (SSU) processome, first precursor of the small eukaryotic ribosomal subunit. During the assembly of the SSU processome in the nucleolus, many ribosome biogenesis factors, an RNA chaperone and ribosomal proteins associate with the nascent pre-rRNA and work in concert to generate RNA folding, modifications, rearrangements and cleavage as well as targeted degradation of pre-ribosomal RNA by the RNA exosome. The sequence is that of Small ribosomal subunit protein eS27 (rps27) from Xenopus laevis (African clawed frog).